A 340-amino-acid chain; its full sequence is Ferredoxin--NADP reductase (340 aa).

FAD-binding residues include Thr-20, Asp-39, Gln-47, Tyr-52, Val-92, Phe-126, Asp-293, and Thr-334.

This sequence belongs to the ferredoxin--NADP reductase type 2 family. As to quaternary structure, homodimer. FAD is required as a cofactor.

The catalysed reaction is 2 reduced [2Fe-2S]-[ferredoxin] + NADP(+) + H(+) = 2 oxidized [2Fe-2S]-[ferredoxin] + NADPH. The sequence is that of Ferredoxin--NADP reductase from Gluconobacter oxydans (strain 621H) (Gluconobacter suboxydans).